The chain runs to 564 residues: Pachytene checkpoint protein 2 (564 aa).

314–321 contacts ATP; it reads GPPGTGKT.

The protein belongs to the AAA ATPase family. PCH2 subfamily.

It localises to the nucleus. The protein resides in the nucleolus. It is found in the chromosome. In terms of biological role, required for the pachytene checkpoint, the meiotic checkpoint that prevents chromosome segregation when defects in recombination and synaptonemal complex formation occurred. Represses meiotic recombination in the rDNA, probably by excluding the meiosis-specific protein HOP1 from the nucleolar region. The sequence is that of Pachytene checkpoint protein 2 (PCH2) from Saccharomyces cerevisiae (strain ATCC 204508 / S288c) (Baker's yeast).